Consider the following 817-residue polypeptide: DNA replication licensing factor Mcm6 (817 aa).

The segment at 152–179 adopts a C4-type zinc-finger fold; the sequence is CLDCQTEIRNVEQQFKFTNPTICRNPVC. The MCM domain occupies 338-544; sequence LYQNLISSLF…VVDYAIARKI (207 aa). ATP-binding residues include S391, T392, A393, K394, S395, and N496. Positions 520-523 match the Arginine finger motif; it reads SRFD. 2 residues coordinate ADP: R611 and E614.

It belongs to the MCM family. In terms of assembly, component of the Mcm2-7 complex. The complex forms a toroidal hexameric ring with the proposed subunit order Mcm2-Mcm6-Mcm4-Mcm7-Mcm3-Mcm5. The heterodimers of Mcm4/Mcm6 and Mcm3/Mcm5 interact with Mcm2 and Mcm7. As to expression, in stage 12 embryos, strongly expressed in the CNS and weakly in the gut.

Its subcellular location is the nucleus. The catalysed reaction is ATP + H2O = ADP + phosphate + H(+). In terms of biological role, acts as a component of the Mcm2-7 complex (Mcm complex) which is the putative replicative helicase essential for 'once per cell cycle' DNA replication initiation and elongation in eukaryotic cells. Core component of CDC45-MCM-GINS (CMG) helicase, the molecular machine that unwinds template DNA during replication, and around which the replisome is built. The active ATPase sites in the Mcm2-7 ring are formed through the interaction surfaces of two neighboring subunits such that a critical structure of a conserved arginine finger motif is provided in trans relative to the ATP-binding site of the Walker A box of the adjacent subunit. The six ATPase active sites, however, are likely to contribute differentially to the complex helicase activity Required for DNA replication and cell proliferation. Required for mitotic cycles, endocycles, and the special S phase associated with the amplification of chorion genes; has a role in origin unwinding or fork elongation at chorion loci. This chain is DNA replication licensing factor Mcm6, found in Drosophila melanogaster (Fruit fly).